The sequence spans 1605 residues: Pentafunctional AROM polypeptide (1605 aa).

The interval 1 to 384 (MTGPTKISIL…YEPRASVVPN (384 aa)) is 3-dehydroquinate synthase. NAD(+) contacts are provided by residues 44-46 (DTN), 81-84 (EVSK), 114-116 (GGV), and aspartate 119. Arginine 130 serves as a coordination point for 7-phospho-2-dehydro-3-deoxy-D-arabino-heptonate. 139–140 (TT) contacts NAD(+). Positions 146 and 152 each coordinate 7-phospho-2-dehydro-3-deoxy-D-arabino-heptonate. An NAD(+)-binding site is contributed by lysine 161. Asparagine 162 is a binding site for 7-phospho-2-dehydro-3-deoxy-D-arabino-heptonate. NAD(+) contacts are provided by residues 179–182 (FLET) and asparagine 190. A Zn(2+)-binding site is contributed by glutamate 194. 7-phospho-2-dehydro-3-deoxy-D-arabino-heptonate-binding positions include 194-197 (EVIK) and lysine 250. The Proton acceptor; for 3-dehydroquinate synthase activity role is filled by glutamate 260. Residues 264–268 (RNLLN) and histidine 271 each bind 7-phospho-2-dehydro-3-deoxy-D-arabino-heptonate. Residue histidine 271 coordinates Zn(2+). Histidine 275 (proton acceptor; for 3-dehydroquinate synthase activity) is an active-site residue. Residues histidine 287 and lysine 356 each contribute to the 7-phospho-2-dehydro-3-deoxy-D-arabino-heptonate site. Zn(2+) is bound at residue histidine 287. The segment at 397–842 (VHPGVSTTSE…WDTLRQKFAV (446 aa)) is EPSP synthase. The active-site For EPSP synthase activity is cysteine 824. The segment at 864–1055 (SASVFIIGMR…KKKQHSFFVS (192 aa)) is shikimate kinase. ATP is bound at residue 871 to 878 (GMRGAGKT). The interval 1056–1276 (LTLPDVRGAD…AAPGQLSATD (221 aa)) is 3-dehydroquinase. Histidine 1179 functions as the Proton acceptor; for 3-dehydroquinate dehydratase activity in the catalytic mechanism. Lysine 1207 functions as the Schiff-base intermediate with substrate; for 3-dehydroquinate dehydratase activity in the catalytic mechanism. Residues 1289 to 1605 (KKRFALFGSP…LSGRTMLTCS (317 aa)) form a shikimate dehydrogenase region.

It in the N-terminal section; belongs to the sugar phosphate cyclases superfamily. Dehydroquinate synthase family. This sequence in the 2nd section; belongs to the EPSP synthase family. The protein in the 3rd section; belongs to the shikimate kinase family. In the 4th section; belongs to the type-I 3-dehydroquinase family. It in the C-terminal section; belongs to the shikimate dehydrogenase family. In terms of assembly, homodimer. Requires Zn(2+) as cofactor.

The protein localises to the cytoplasm. The catalysed reaction is 7-phospho-2-dehydro-3-deoxy-D-arabino-heptonate = 3-dehydroquinate + phosphate. It catalyses the reaction 3-dehydroquinate = 3-dehydroshikimate + H2O. The enzyme catalyses shikimate + NADP(+) = 3-dehydroshikimate + NADPH + H(+). It carries out the reaction shikimate + ATP = 3-phosphoshikimate + ADP + H(+). The catalysed reaction is 3-phosphoshikimate + phosphoenolpyruvate = 5-O-(1-carboxyvinyl)-3-phosphoshikimate + phosphate. It participates in metabolic intermediate biosynthesis; chorismate biosynthesis; chorismate from D-erythrose 4-phosphate and phosphoenolpyruvate: step 2/7. Its pathway is metabolic intermediate biosynthesis; chorismate biosynthesis; chorismate from D-erythrose 4-phosphate and phosphoenolpyruvate: step 3/7. It functions in the pathway metabolic intermediate biosynthesis; chorismate biosynthesis; chorismate from D-erythrose 4-phosphate and phosphoenolpyruvate: step 4/7. The protein operates within metabolic intermediate biosynthesis; chorismate biosynthesis; chorismate from D-erythrose 4-phosphate and phosphoenolpyruvate: step 5/7. It participates in metabolic intermediate biosynthesis; chorismate biosynthesis; chorismate from D-erythrose 4-phosphate and phosphoenolpyruvate: step 6/7. The AROM polypeptide catalyzes 5 consecutive enzymatic reactions in prechorismate polyaromatic amino acid biosynthesis. This is Pentafunctional AROM polypeptide from Aspergillus fumigatus (strain CBS 144.89 / FGSC A1163 / CEA10) (Neosartorya fumigata).